Consider the following 141-residue polypeptide: Cystatin-SN (141 aa).

A signal peptide spans 1-20; sequence MAQYLSTLLLLLATLAVALA. Residues 76 to 80 carry the Secondary area of contact motif; it reads QTVGG. Disulfide bonds link C94–C104 and C118–C138.

It belongs to the cystatin family. Expressed in submandibular and sublingual saliva but not in parotid saliva (at protein level). Expressed in saliva, tears, urine and seminal fluid.

It is found in the secreted. In terms of biological role, human saliva appears to contain several cysteine proteinase inhibitors that are immunologically related to cystatin S but that differ in their specificity due to amino acid sequence differences. Cystatin SN, with a pI of 7.5, is a much better inhibitor of papain and dipeptidyl peptidase I than is cystatin S, although both inhibit ficin equally well. The polypeptide is Cystatin-SN (CST1) (Homo sapiens (Human)).